We begin with the raw amino-acid sequence, 547 residues long: Chaperonin GroEL (547 aa).

ATP is bound by residues 30 to 33 (TLGP), Lys-51, 87 to 91 (DGTTT), Gly-415, and Asp-496. A disordered region spans residues 528-547 (KEGAAPAGGMPDMGGMGGMM). The segment covering 538-547 (PDMGGMGGMM) has biased composition (gly residues).

Belongs to the chaperonin (HSP60) family. In terms of assembly, forms a cylinder of 14 subunits composed of two heptameric rings stacked back-to-back. Interacts with the co-chaperonin GroES.

It is found in the cytoplasm. The enzyme catalyses ATP + H2O + a folded polypeptide = ADP + phosphate + an unfolded polypeptide.. Its function is as follows. Together with its co-chaperonin GroES, plays an essential role in assisting protein folding. The GroEL-GroES system forms a nano-cage that allows encapsulation of the non-native substrate proteins and provides a physical environment optimized to promote and accelerate protein folding. The sequence is that of Chaperonin GroEL from Ruegeria sp. (strain TM1040) (Silicibacter sp.).